The primary structure comprises 335 residues: Nucleoid-associated protein PputGB1_0980 (335 aa).

This sequence belongs to the YejK family.

The protein resides in the cytoplasm. Its subcellular location is the nucleoid. This chain is Nucleoid-associated protein PputGB1_0980, found in Pseudomonas putida (strain GB-1).